Reading from the N-terminus, the 300-residue chain is Type II methyltransferase M.XycI (300 aa).

Residues 109 to 129 (RGYRAPDKKNPARAMDVRPDT) are disordered. A compositionally biased stretch (basic and acidic residues) spans 112-127 (RAPDKKNPARAMDVRP).

Belongs to the N(4)/N(6)-methyltransferase family. N(4) subfamily.

It catalyses the reaction a 2'-deoxycytidine in DNA + S-adenosyl-L-methionine = an N(4)-methyl-2'-deoxycytidine in DNA + S-adenosyl-L-homocysteine + H(+). Its function is as follows. A beta subtype methylase, recognizes the double-stranded sequence 5'-CCCGGG-3', methylates C-2 on both strands, and protects the DNA from cleavage by the XcyI endonuclease. This is Type II methyltransferase M.XycI (xcyIM) from Xanthomonas campestris pv. cyanopsidis.